We begin with the raw amino-acid sequence, 256 residues long: 5-oxoprolinase subunit A (256 aa).

The protein belongs to the LamB/PxpA family. Forms a complex composed of PxpA, PxpB and PxpC.

It carries out the reaction 5-oxo-L-proline + ATP + 2 H2O = L-glutamate + ADP + phosphate + H(+). Catalyzes the cleavage of 5-oxoproline to form L-glutamate coupled to the hydrolysis of ATP to ADP and inorganic phosphate. In Alkaliphilus metalliredigens (strain QYMF), this protein is 5-oxoprolinase subunit A.